The sequence spans 562 residues: Calcium-dependent protein kinase 5 (562 aa).

The 255-residue stretch at 118 to 372 (ELDKYKLGKG…VHKIVNHKWF (255 aa)) folds into the Protein kinase domain. ATP contacts are provided by residues 124 to 132 (LGKGSYGNV) and K147. The Proton acceptor role is filled by D238. The short motif at 394–402 (KFKKFHKLC) is the J domain autoinhibitory motif element. A j domain region spans residues 394-429 (KFKKFHKLCKIKKLAITCIAYQLNKKKFGKMKKTFE). Positions 403 to 412 (KIKKLAITCI) match the J domain EF-hand interaction motif motif. EF-hand domains follow at residues 419 to 453 (KKFG…VGDN), 454 to 489 (EIDR…HSIL), 490 to 525 (EQDA…SNDQ), and 528 to 562 (FSKE…GRQS). Residues D432, N434, D436, E443, D467, D469, N471, E478, D503, N505, D507, E514, D541, N543, D545, Y547, and E552 each coordinate Ca(2+).

It belongs to the protein kinase superfamily. Ser/Thr protein kinase family. CDPK subfamily. The cofactor is Mg(2+). Post-translationally, may be palmitoylated. Autophosphorylated in vitro.

It localises to the cytoplasm. Its subcellular location is the cytoplasmic vesicle. The protein resides in the secretory vesicle. The protein localises to the microneme membrane. It is found in the cell membrane. The enzyme catalyses L-seryl-[protein] + ATP = O-phospho-L-seryl-[protein] + ADP + H(+). The catalysed reaction is L-threonyl-[protein] + ATP = O-phospho-L-threonyl-[protein] + ADP + H(+). Its activity is regulated as follows. Activated by calcium. Upon calcium binding to the EF-hand domains, the C-terminus of the junction domain (J domain) undergoes a conformational change which results in the dissociation of the pseudo-substrate inhibitory motif from the catalytic domain. This, in turn, may facilitate the autophosphorylation of the activation loop at Thr-278, which leads to the kinase activation. Its function is as follows. Calcium-dependent protein kinase which acts as a sensor and effector of intracellular Ca(2+) levels probably in part downstream of cGMP-activated PKG kinase. Plays a central role in host erythrocytes and hepatocytes infection cycles. During the liver stage, involved in sporozoite motility and thus in sporozoite invasion of host hepatocytes, probably together with CDPK1 and CDPK4. Involved in merosome egress from host hepatocytes, probably together with CDPK4. Required for the release of hepatic merozoites from merosomes in the host blood stream. During the asexual blood stage, required for merozoite egress from host erythrocytes by triggering microneme secretion. Phosphorylates transporter NPT1 at late schizont stage. The sequence is that of Calcium-dependent protein kinase 5 from Plasmodium berghei (strain Anka).